A 513-amino-acid chain; its full sequence is Varicidin biosynthesis cluster-specific transcription factor (513 aa).

The zn(2)-C6 fungal-type DNA-binding region spans 16 to 54 (CERCRLHKLKCTILPQKRFEGPQEAPEQCTRCARAKAKC). 2 disordered regions span residues 58–92 (RRAPPKHRASSSNDRSSVSKGINSTTPATRTMQPN) and 97–116 (VSSHRIELPPSPASNQSSLK). A compositionally biased stretch (low complexity) spans 67 to 76 (SSSNDRSSVS). Over residues 77 to 92 (KGINSTTPATRTMQPN) the composition is skewed to polar residues.

It is found in the nucleus. Its function is as follows. Transcription factor that regulates the expression of the gene cluster that mediates the biosynthesis of varicidin A, an antifungal natural product containing a cis-octahydrodecalin core. The chain is Varicidin biosynthesis cluster-specific transcription factor from Talaromyces variabilis (Penicillium variabile).